The sequence spans 438 residues: tRNA-2-methylthio-N(6)-dimethylallyladenosine synthase (438 aa).

Residues lysine 4–alanine 120 form the MTTase N-terminal domain. 6 residues coordinate [4Fe-4S] cluster: cysteine 13, cysteine 49, cysteine 83, cysteine 158, cysteine 162, and cysteine 165. Positions glycine 144–glutamate 377 constitute a Radical SAM core domain. The region spanning glutamate 377–leucine 438 is the TRAM domain.

Belongs to the methylthiotransferase family. MiaB subfamily. Monomer. Requires [4Fe-4S] cluster as cofactor.

It is found in the cytoplasm. The enzyme catalyses N(6)-dimethylallyladenosine(37) in tRNA + (sulfur carrier)-SH + AH2 + 2 S-adenosyl-L-methionine = 2-methylsulfanyl-N(6)-dimethylallyladenosine(37) in tRNA + (sulfur carrier)-H + 5'-deoxyadenosine + L-methionine + A + S-adenosyl-L-homocysteine + 2 H(+). Functionally, catalyzes the methylthiolation of N6-(dimethylallyl)adenosine (i(6)A), leading to the formation of 2-methylthio-N6-(dimethylallyl)adenosine (ms(2)i(6)A) at position 37 in tRNAs that read codons beginning with uridine. This chain is tRNA-2-methylthio-N(6)-dimethylallyladenosine synthase, found in Trichlorobacter lovleyi (strain ATCC BAA-1151 / DSM 17278 / SZ) (Geobacter lovleyi).